The sequence spans 247 residues: ATP synthase subunit a, chloroplastic (247 aa).

Transmembrane regions (helical) follow at residues 38-58, 95-115, 134-154, 199-219, and 220-240; these read QVLI…TLAV, VPFI…GALL, INTT…AGLT, LVVV…VMFL, and GLFT…AYIG.

It belongs to the ATPase A chain family. As to quaternary structure, F-type ATPases have 2 components, CF(1) - the catalytic core - and CF(0) - the membrane proton channel. CF(1) has five subunits: alpha(3), beta(3), gamma(1), delta(1), epsilon(1). CF(0) has four main subunits: a, b, b' and c.

Its subcellular location is the plastid. It localises to the chloroplast thylakoid membrane. Its function is as follows. Key component of the proton channel; it plays a direct role in the translocation of protons across the membrane. This chain is ATP synthase subunit a, chloroplastic, found in Jasminum nudiflorum (Winter jasmine).